Here is a 597-residue protein sequence, read N- to C-terminus: Arginine--tRNA ligase (597 aa).

Residues 125-135 (PNTNKPLHLGH) carry the 'HIGH' region motif.

It belongs to the class-I aminoacyl-tRNA synthetase family. Monomer.

Its subcellular location is the cytoplasm. The enzyme catalyses tRNA(Arg) + L-arginine + ATP = L-arginyl-tRNA(Arg) + AMP + diphosphate. The chain is Arginine--tRNA ligase from Bacteroides thetaiotaomicron (strain ATCC 29148 / DSM 2079 / JCM 5827 / CCUG 10774 / NCTC 10582 / VPI-5482 / E50).